Here is a 341-residue protein sequence, read N- to C-terminus: Cyclic GMP-AMP synthase (341 aa).

Serine 56 serves as a coordination point for ATP. Active-site residues include aspartate 71 and aspartate 73. Residue aspartate 73 coordinates Mg(2+). Asparagine 109 provides a ligand contact to ATP. Aspartate 123 is an active-site residue. Aspartate 123 is a Mg(2+) binding site. Leucine 192 and aspartate 238 together coordinate ATP.

This sequence belongs to the CD-NTase family. B04 subfamily. As to quaternary structure, monomer. Requires Mg(2+) as cofactor.

It catalyses the reaction GTP + ATP = 3',3'-cGAMP + 2 diphosphate. Cyclic nucleotide synthase (second messenger synthase) of a CBASS antivirus system. CBASS (cyclic oligonucleotide-based antiphage signaling system) provides immunity against bacteriophage. The CD-NTase protein synthesizes cyclic nucleotides in response to infection; these serve as specific second messenger signals. The signals activate a diverse range of effectors, leading to bacterial cell death and thus abortive phage infection. A type II-A(GA) CBASS system. Its function is as follows. Catalyzes the synthesis of 3'3'-cyclic GMP-AMP (3'3'-cGAMP) from GTP and ATP, a second messenger in cell signal transduction. May make another product. Controls the activity of the CBASS cGAMP-activated phospholipase effector protein. This Bacteroides fragilis protein is Cyclic GMP-AMP synthase.